The sequence spans 652 residues: Probable potassium transport system protein Kup (652 aa).

Residues 1–20 (MSNDTSPGTSSVDSKSSDPS) are compositionally biased toward low complexity. The tract at residues 1–26 (MSNDTSPGTSSVDSKSSDPSYGVPGH) is disordered. The next 12 membrane-spanning stretches (helical) occupy residues 36 to 56 (LSLG…LYAL), 76 to 96 (LVSL…VMFI), 125 to 145 (WLIV…MITP), 161 to 181 (PSFD…LFCI), 193 to 213 (FGPI…FNII), 228 to 248 (AIHF…SVVL), 270 to 290 (LGWY…QCAL), 314 to 334 (LIIL…TGAF), 362 to 382 (IYIP…IAMF), 391 to 411 (AYGI…GVLV), 419 to 439 (AWQS…FFLS), and 444 to 464 (IPEG…MLMT).

This sequence belongs to the HAK/KUP transporter (TC 2.A.72) family.

Its subcellular location is the cell inner membrane. The catalysed reaction is K(+)(in) + H(+)(in) = K(+)(out) + H(+)(out). Transport of potassium into the cell. Likely operates as a K(+):H(+) symporter. The chain is Probable potassium transport system protein Kup from Zymomonas mobilis subsp. mobilis (strain ATCC 31821 / ZM4 / CP4).